We begin with the raw amino-acid sequence, 549 residues long: Hydroxylamine reductase (549 aa).

4 residues coordinate [4Fe-4S] cluster: Cys3, Cys6, Cys15, and Cys21. Hybrid [4Fe-2O-2S] cluster contacts are provided by His244, Glu268, Cys313, Cys405, Cys433, Cys458, Glu492, and Lys494. The residue at position 405 (Cys405) is a Cysteine persulfide.

Belongs to the HCP family. It depends on [4Fe-4S] cluster as a cofactor. Requires hybrid [4Fe-2O-2S] cluster as cofactor.

It localises to the cytoplasm. It carries out the reaction A + NH4(+) + H2O = hydroxylamine + AH2 + H(+). Catalyzes the reduction of hydroxylamine to form NH(3) and H(2)O. The sequence is that of Hydroxylamine reductase from Crocosphaera subtropica (strain ATCC 51142 / BH68) (Cyanothece sp. (strain ATCC 51142)).